The sequence spans 338 residues: Mitochondrial transcription factor 1 (338 aa).

S-adenosyl-L-methionine contacts are provided by leucine 23, aspartate 76, aspartate 100, and asparagine 136.

The protein belongs to the class I-like SAM-binding methyltransferase superfamily. rRNA adenine N(6)-methyltransferase family.

Its subcellular location is the mitochondrion. Functionally, mitochondrial transcription factor that confers selective promoter recognition on the core subunit of the yeast mitochondrial RNA polymerase. Interacts with DNA in a non-specific manner. The protein is Mitochondrial transcription factor 1 (MTF1) of Lachancea kluyveri (Yeast).